Consider the following 93-residue polypeptide: Defensin 5 (93 aa).

The signal sequence occupies residues 1–19; sequence MKKLVLLSALVLLALQVEA. A propeptide spanning residues 20–58 is cleaved from the precursor; sequence EPTPKTDEGTKTDEQPGKEDQVVSVSIEGQGDPAFQDAV. 3 cysteine pairs are disulfide-bonded: cysteine 64–cysteine 92, cysteine 66–cysteine 81, and cysteine 71–cysteine 91.

The protein belongs to the alpha-defensin family. As to expression, small intestine. Not present in heart, liver, spleen, kidney, large intestine and colon.

The protein localises to the secreted. Functionally, probably contributes to the antimicrobial barrier function of the small intestine. The sequence is that of Defensin 5 from Rattus norvegicus (Rat).